The following is a 934-amino-acid chain: 2-oxoglutarate dehydrogenase E1 component (934 aa).

Basic and acidic residues predominate over residues 515–537; sequence RAAQDKIDKSDKMDNPDMERPES. Residues 515–544 are disordered; it reads RAAQDKIDKSDKMDNPDMERPESLQEPLQS.

This sequence belongs to the alpha-ketoglutarate dehydrogenase family. As to quaternary structure, homodimer. Part of the 2-oxoglutarate dehydrogenase (OGDH) complex composed of E1 (2-oxoglutarate dehydrogenase), E2 (dihydrolipoamide succinyltransferase) and E3 (dihydrolipoamide dehydrogenase); the complex contains multiple copies of the three enzymatic components (E1, E2 and E3). Requires thiamine diphosphate as cofactor.

It catalyses the reaction N(6)-[(R)-lipoyl]-L-lysyl-[protein] + 2-oxoglutarate + H(+) = N(6)-[(R)-S(8)-succinyldihydrolipoyl]-L-lysyl-[protein] + CO2. Its function is as follows. E1 component of the 2-oxoglutarate dehydrogenase (OGDH) complex which catalyzes the decarboxylation of 2-oxoglutarate, the first step in the conversion of 2-oxoglutarate to succinyl-CoA and CO(2). The chain is 2-oxoglutarate dehydrogenase E1 component from Staphylococcus haemolyticus (strain JCSC1435).